The sequence spans 110 residues: Iron-sulfur cluster assembly protein CyaY (110 aa).

Belongs to the frataxin family.

Involved in iron-sulfur (Fe-S) cluster assembly. May act as a regulator of Fe-S biogenesis. The sequence is that of Iron-sulfur cluster assembly protein CyaY from Pseudomonas fluorescens (strain Pf0-1).